A 265-amino-acid polypeptide reads, in one-letter code: H-2 class II histocompatibility antigen, A beta chain (265 aa).

The first 27 residues, 1 to 27 (MALQIPSLLLSAAVVVLMVLSSPGTEG), serve as a signal peptide directing secretion. The tract at residues 28-122 (GDSERHFVYQ…PETHTSLRRL (95 aa)) is beta-1. Over 28-226 (GDSERHFVYQ…RAQSESAWSK (199 aa)) the chain is Extracellular. 2 disulfide bridges follow: Cys42–Cys106 and Cys145–Cys201. N-linked (GlcNAc...) asparagine glycosylation is present at Asn46. The beta-2 stretch occupies residues 123-216 (EQPNVVISLS…SLKSPITVEW (94 aa)). One can recognise an Ig-like C1-type domain in the interval 125–213 (PNVVISLSRT…EHPSLKSPIT (89 aa)). Residues 217 to 226 (RAQSESAWSK) form a connecting peptide region. A helical membrane pass occupies residues 227–247 (MLSGIGGCVLGVIFLGLGLFI). Over 248–265 (RHRSQKGPRGPPPAGLLQ) the chain is Cytoplasmic.

The protein belongs to the MHC class II family. Ubiquitinated in immature dendritic cells leading to down-regulation of MHC class II.

The protein localises to the membrane. The protein is H-2 class II histocompatibility antigen, A beta chain (H2-Ab1) of Mus musculus (Mouse).